The sequence spans 590 residues: NADH-ubiquinone oxidoreductase chain 5 (590 aa).

The next 15 helical transmembrane spans lie at 1–21, 31–51, 77–97, 104–124, 130–150, 167–187, 190–210, 230–250, 261–281, 314–336, 355–375, 398–418, 439–461, 466–486, and 568–588; these read MNLI…MSIM, LMVL…NNEL, LLFT…SLWY, INKF…IITA, LFIG…WWHG, IGDI…SINM, LMIQ…AAAT, TPVS…FLLI, IMLT…AAAA, AFLH…GSYI, LPMT…MPFL, IMIT…IMLF, HPLA…STLQ, VTMP…GVLL, and MIKN…LFIM.

The protein belongs to the complex I subunit 5 family.

Its subcellular location is the mitochondrion inner membrane. The enzyme catalyses a ubiquinone + NADH + 5 H(+)(in) = a ubiquinol + NAD(+) + 4 H(+)(out). Core subunit of the mitochondrial membrane respiratory chain NADH dehydrogenase (Complex I) that is believed to belong to the minimal assembly required for catalysis. Complex I functions in the transfer of electrons from NADH to the respiratory chain. The immediate electron acceptor for the enzyme is believed to be ubiquinone. The sequence is that of NADH-ubiquinone oxidoreductase chain 5 (MT-ND5) from Lycodon semicarinatus (Ryukyu odd-tooth snake).